Reading from the N-terminus, the 382-residue chain is UDP-N-acetylglucosamine--N-acetylmuramyl-(pentapeptide) pyrophosphoryl-undecaprenol N-acetylglucosamine transferase (382 aa).

Residues 22–24 (TGG), asparagine 134, arginine 186, serine 212, 285–290 (ALTVAE), and glutamine 311 contribute to the UDP-N-acetyl-alpha-D-glucosamine site.

The protein belongs to the glycosyltransferase 28 family. MurG subfamily.

It is found in the cell inner membrane. It catalyses the reaction di-trans,octa-cis-undecaprenyl diphospho-N-acetyl-alpha-D-muramoyl-L-alanyl-D-glutamyl-meso-2,6-diaminopimeloyl-D-alanyl-D-alanine + UDP-N-acetyl-alpha-D-glucosamine = di-trans,octa-cis-undecaprenyl diphospho-[N-acetyl-alpha-D-glucosaminyl-(1-&gt;4)]-N-acetyl-alpha-D-muramoyl-L-alanyl-D-glutamyl-meso-2,6-diaminopimeloyl-D-alanyl-D-alanine + UDP + H(+). It functions in the pathway cell wall biogenesis; peptidoglycan biosynthesis. In terms of biological role, cell wall formation. Catalyzes the transfer of a GlcNAc subunit on undecaprenyl-pyrophosphoryl-MurNAc-pentapeptide (lipid intermediate I) to form undecaprenyl-pyrophosphoryl-MurNAc-(pentapeptide)GlcNAc (lipid intermediate II). This Pseudoalteromonas atlantica (strain T6c / ATCC BAA-1087) protein is UDP-N-acetylglucosamine--N-acetylmuramyl-(pentapeptide) pyrophosphoryl-undecaprenol N-acetylglucosamine transferase.